The primary structure comprises 330 residues: Beta-1,6-galactofuranosyltransferase WbbI (330 aa).

It is found in the cytoplasm. It functions in the pathway bacterial outer membrane biogenesis; lipopolysaccharide biosynthesis. Involved in the transfer of galactofuranose (Galf) onto an alpha-D-gluco-configured acceptor substrate to form a beta-1,6-linkage. It uses n-octyl alpha-D-glucopyranoside as an acceptor substrate for the addition of galactofuranose from the donor substrate UDP-galactofuranose. It is not able to use beta-D-glucopyranoside isomers. In Escherichia coli (strain K12), this protein is Beta-1,6-galactofuranosyltransferase WbbI (wbbI).